The sequence spans 351 residues: MSGSETGLMAATRESMQFTMALHQQQQHSQAQPQQSQNRPLSFGGDDGTALYKQPMRSVSPPQQYQPNSAGENSVLNMNLPGGESGGMTGTGSEPVKKRRGRPRKYGPDSGEMSLGLNPGAPSFTVSQPSSGGDGGEKKRGRPPGSSSKRLKLQALGSTGIGFTPHVLTVLAGEDVSSKIMALTHNGPRAVCVLSANGAISNVTLRQSATSGGTVTYEGRFEILSLSGSFHLLENNGQRSRTGGLSVSLSSPDGNVLGGSVAGLLIAASPVQIVVGSFLPDGEKEPKQHVGQMGLSSPVLPRVAPTQVLMTPSSPQSRGTMSESSCGGGHGSPIHQSTGGPYNNTINMPWK.

The disordered stretch occupies residues 1-151 (MSGSETGLMA…RPPGSSSKRL (151 aa)). Positions 23–37 (HQQQQHSQAQPQQSQ) are enriched in low complexity. Residues 60–77 (SPPQQYQPNSAGENSVLN) are compositionally biased toward polar residues. The short motif at 97–105 (KKRRGRPRK) is the Bipartite nuclear localization signal element. 2 consecutive DNA-binding regions (a.T hook) follow at residues 97-109 (KKRR…YGPD) and 138-149 (KKRGRPPGSSSK). In terms of domain architecture, PPC spans 159-301 (TGIGFTPHVL…QMGLSSPVLP (143 aa)). Polar residues-rich tracts occupy residues 310 to 325 (MTPS…SESS) and 334 to 351 (IHQS…MPWK). Residues 310-351 (MTPSSPQSRGTMSESSCGGGHGSPIHQSTGGPYNNTINMPWK) form a disordered region.

Its subcellular location is the nucleus. In terms of biological role, transcription factor that specifically binds AT-rich DNA sequences related to the nuclear matrix attachment regions (MARs). The sequence is that of AT-hook motif nuclear-localized protein 10 from Arabidopsis thaliana (Mouse-ear cress).